Here is a 228-residue protein sequence, read N- to C-terminus: ATP-dependent dethiobiotin synthetase BioD (228 aa).

12-17 serves as a coordination point for ATP; the sequence is EIGKTT. Residue Thr16 participates in Mg(2+) binding. Residue Lys37 is part of the active site. Position 41 (Ser41) interacts with substrate. Residues Asp54, 116 to 119, and 205 to 207 each bind ATP; these read EGAG and PRL. 2 residues coordinate Mg(2+): Asp54 and Glu116.

Belongs to the dethiobiotin synthetase family. In terms of assembly, homodimer. Mg(2+) serves as cofactor.

The protein localises to the cytoplasm. It catalyses the reaction (7R,8S)-7,8-diammoniononanoate + CO2 + ATP = (4R,5S)-dethiobiotin + ADP + phosphate + 3 H(+). The protein operates within cofactor biosynthesis; biotin biosynthesis; biotin from 7,8-diaminononanoate: step 1/2. Catalyzes a mechanistically unusual reaction, the ATP-dependent insertion of CO2 between the N7 and N8 nitrogen atoms of 7,8-diaminopelargonic acid (DAPA, also called 7,8-diammoniononanoate) to form a ureido ring. This is ATP-dependent dethiobiotin synthetase BioD from Pseudomonas paraeruginosa (strain DSM 24068 / PA7) (Pseudomonas aeruginosa (strain PA7)).